Reading from the N-terminus, the 66-residue chain is Large ribosomal subunit protein bL35 (66 aa).

The protein belongs to the bacterial ribosomal protein bL35 family.

The sequence is that of Large ribosomal subunit protein bL35 from Treponema denticola (strain ATCC 35405 / DSM 14222 / CIP 103919 / JCM 8153 / KCTC 15104).